Here is a 154-residue protein sequence, read N- to C-terminus: Myoglobin (154 aa).

In terms of domain architecture, Globin spans 2–148; the sequence is GLSDGEWQLV…FRKDIAAKYK (147 aa). The residue at position 4 (Ser-4) is a Phosphoserine. His-65 is a binding site for nitrite. His-65 contacts O2. Thr-68 bears the Phosphothreonine mark. His-94 serves as a coordination point for heme b.

It belongs to the globin family. Monomeric.

Its subcellular location is the cytoplasm. It localises to the sarcoplasm. The enzyme catalyses Fe(III)-heme b-[protein] + nitric oxide + H2O = Fe(II)-heme b-[protein] + nitrite + 2 H(+). It catalyses the reaction H2O2 + AH2 = A + 2 H2O. Monomeric heme protein which primary function is to store oxygen and facilitate its diffusion within muscle tissues. Reversibly binds oxygen through a pentacoordinated heme iron and enables its timely and efficient release as needed during periods of heightened demand. Depending on the oxidative conditions of tissues and cells, and in addition to its ability to bind oxygen, it also has a nitrite reductase activity whereby it regulates the production of bioactive nitric oxide. Under stress conditions, like hypoxia and anoxia, it also protects cells against reactive oxygen species thanks to its pseudoperoxidase activity. This chain is Myoglobin (MB), found in Delphinus delphis (Short-beaked common dolphin).